A 354-amino-acid polypeptide reads, in one-letter code: tRNA dimethylallyltransferase (354 aa).

28-35 (GPTATGKS) contacts ATP. Residue 30-35 (TATGKS) coordinates substrate. An interaction with substrate tRNA region spans residues 53 to 56 (DSRQ).

The protein belongs to the IPP transferase family. As to quaternary structure, monomer. Mg(2+) serves as cofactor.

It carries out the reaction adenosine(37) in tRNA + dimethylallyl diphosphate = N(6)-dimethylallyladenosine(37) in tRNA + diphosphate. In terms of biological role, catalyzes the transfer of a dimethylallyl group onto the adenine at position 37 in tRNAs that read codons beginning with uridine, leading to the formation of N6-(dimethylallyl)adenosine (i(6)A). The sequence is that of tRNA dimethylallyltransferase from Synechococcus sp. (strain JA-2-3B'a(2-13)) (Cyanobacteria bacterium Yellowstone B-Prime).